A 502-amino-acid chain; its full sequence is CBL-interacting protein kinase 11 (502 aa).

The Protein kinase domain occupies 12 to 267 (YEVGKQLGQG…IPRIKRSTWY (256 aa)). Residues 18-26 (LGQGTFAKV) and lysine 41 contribute to the ATP site. The active-site Proton acceptor is the aspartate 135. An activation loop region spans residues 153-182 (DFGLSALAESKRQDGLLHTTCGTPAYVAPE). Residues 297-333 (AECSTSEENQGSLSLPNLNAFDIISLSTGFNLSGFFE) enclose the NAF domain. The segment at 339–367 (QEERFTTRQPVTTVLGKLKELAKRLKLKV) is PPI. Positions 447-502 (LQGEQQQSPLPPELPQDQLQPSLPQQEKQDMPEPPLLPQVPQEEVQTSIPAEQTKN) are disordered. A compositionally biased stretch (low complexity) spans 461-472 (PQDQLQPSLPQQ). The segment covering 493 to 502 (TSIPAEQTKN) has biased composition (polar residues).

Belongs to the protein kinase superfamily. CAMK Ser/Thr protein kinase family. SNF1 subfamily. Mn(2+) is required as a cofactor.

It carries out the reaction L-seryl-[protein] + ATP = O-phospho-L-seryl-[protein] + ADP + H(+). It catalyses the reaction L-threonyl-[protein] + ATP = O-phospho-L-threonyl-[protein] + ADP + H(+). CIPK serine-threonine protein kinases interact with CBL proteins. Binding of a CBL protein to the regulatory NAF domain of CIPK protein lead to the activation of the kinase in a calcium-dependent manner. This is CBL-interacting protein kinase 11 (CIPK11) from Oryza sativa subsp. japonica (Rice).